We begin with the raw amino-acid sequence, 386 residues long: Tryptophan--tRNA ligase (386 aa).

The 'HIGH' region signature appears at 82–90 (PSGPMHIGH). A 'KMSKS' region motif is present at residues 253–257 (KMSAS).

It belongs to the class-I aminoacyl-tRNA synthetase family.

Its subcellular location is the cytoplasm. The enzyme catalyses tRNA(Trp) + L-tryptophan + ATP = L-tryptophyl-tRNA(Trp) + AMP + diphosphate + H(+). The protein is Tryptophan--tRNA ligase of Pyrococcus horikoshii (strain ATCC 700860 / DSM 12428 / JCM 9974 / NBRC 100139 / OT-3).